The sequence spans 149 residues: 3-dehydroquinate dehydratase (149 aa).

Residue Y26 is the Proton acceptor of the active site. Residues N77, H83, and D90 each coordinate substrate. H103 (proton donor) is an active-site residue. Residues 104-105 (LS) and R114 contribute to the substrate site.

This sequence belongs to the type-II 3-dehydroquinase family. As to quaternary structure, homododecamer.

It carries out the reaction 3-dehydroquinate = 3-dehydroshikimate + H2O. Its pathway is metabolic intermediate biosynthesis; chorismate biosynthesis; chorismate from D-erythrose 4-phosphate and phosphoenolpyruvate: step 3/7. Its function is as follows. Catalyzes a trans-dehydration via an enolate intermediate. The protein is 3-dehydroquinate dehydratase of Psychromonas ingrahamii (strain DSM 17664 / CCUG 51855 / 37).